Consider the following 243-residue polypeptide: Proteasome subunit beta (243 aa).

A propeptide spans 1–49 (MRTPTGDLSDGPAEELGRDQPVFGPEIGEFEHSERRAAQADGEGEMKTG) (removed in mature form; by autocatalysis). The tract at residues 1–50 (MRTPTGDLSDGPAEELGRDQPVFGPEIGEFEHSERRAAQADGEGEMKTGT) is disordered. Over residues 29-38 (EFEHSERRAA) the composition is skewed to basic and acidic residues. Threonine 50 serves as the catalytic Nucleophile.

The protein belongs to the peptidase T1B family. As to quaternary structure, the 20S proteasome core is composed of 14 alpha and 14 beta subunits that assemble into four stacked heptameric rings, resulting in a barrel-shaped structure. The two inner rings, each composed of seven catalytic beta subunits, are sandwiched by two outer rings, each composed of seven alpha subunits. The catalytic chamber with the active sites is on the inside of the barrel. Has a gated structure, the ends of the cylinder being occluded by the N-termini of the alpha-subunits. Is capped at one or both ends by the proteasome regulatory ATPase, PAN.

It is found in the cytoplasm. It carries out the reaction Cleavage of peptide bonds with very broad specificity.. With respect to regulation, the formation of the proteasomal ATPase PAN-20S proteasome complex, via the docking of the C-termini of PAN into the intersubunit pockets in the alpha-rings, triggers opening of the gate for substrate entry. Interconversion between the open-gate and close-gate conformations leads to a dynamic regulation of the 20S proteasome proteolysis activity. Its function is as follows. Component of the proteasome core, a large protease complex with broad specificity involved in protein degradation. This Halorubrum lacusprofundi (strain ATCC 49239 / DSM 5036 / JCM 8891 / ACAM 34) protein is Proteasome subunit beta.